A 684-amino-acid chain; its full sequence is uncharacterized protein (684 aa).

The Helicase ATP-binding domain maps to 54-239; sequence LKYLYNKKDV…LLFNRDFEVV (186 aa). Residue 67 to 74 coordinates ATP; it reads TSTASGKS. The short motif at 181 to 184 is the DEVH box element; sequence DELH. Positions 264 to 419 constitute a Helicase C-terminal domain; the sequence is LLRRLIENLV…YMPVNIKNRF (156 aa).

It belongs to the helicase family.

This is an uncharacterized protein from Methanocaldococcus jannaschii (strain ATCC 43067 / DSM 2661 / JAL-1 / JCM 10045 / NBRC 100440) (Methanococcus jannaschii).